The primary structure comprises 852 residues: DNA mismatch repair protein MutS (852 aa).

ATP is bound at residue 602 to 609 (GPNMSGKS).

Belongs to the DNA mismatch repair MutS family.

Functionally, this protein is involved in the repair of mismatches in DNA. It is possible that it carries out the mismatch recognition step. This protein has a weak ATPase activity. This Streptococcus thermophilus (strain ATCC BAA-250 / LMG 18311) protein is DNA mismatch repair protein MutS.